Reading from the N-terminus, the 128-residue chain is uncharacterized protein (128 aa).

A run of 2 helical transmembrane segments spans residues 52–72 (LLVILLLIIGFLSCLLGGIFL) and 91–111 (LFVAFFVVGSLLLLVAVVMLI).

The protein localises to the cell membrane. This is an uncharacterized protein from Mycoplasma pneumoniae (strain ATCC 29342 / M129 / Subtype 1) (Mycoplasmoides pneumoniae).